Consider the following 380-residue polypeptide: Beta sliding clamp (380 aa).

It belongs to the beta sliding clamp family. In terms of assembly, forms a ring-shaped head-to-tail homodimer around DNA which binds and tethers DNA polymerases and other proteins to the DNA. The DNA replisome complex has a single clamp-loading complex (3 tau and 1 each of delta, delta', psi and chi subunits) which binds 3 Pol III cores (1 core on the leading strand and 2 on the lagging strand) each with a beta sliding clamp dimer. Additional proteins in the replisome are other copies of gamma, psi and chi, Ssb, DNA helicase and RNA primase.

It is found in the cytoplasm. Confers DNA tethering and processivity to DNA polymerases and other proteins. Acts as a clamp, forming a ring around DNA (a reaction catalyzed by the clamp-loading complex) which diffuses in an ATP-independent manner freely and bidirectionally along dsDNA. Initially characterized for its ability to contact the catalytic subunit of DNA polymerase III (Pol III), a complex, multichain enzyme responsible for most of the replicative synthesis in bacteria; Pol III exhibits 3'-5' exonuclease proofreading activity. The beta chain is required for initiation of replication as well as for processivity of DNA replication. The sequence is that of Beta sliding clamp (dnaN) from Mycoplasma genitalium (strain ATCC 33530 / DSM 19775 / NCTC 10195 / G37) (Mycoplasmoides genitalium).